The chain runs to 207 residues: MVIVKKISAIEVLDSRGNPTIKTKVELCDGSIGEAIVPSGASTGKRERLELRDGGEAFGGKGVLKAIKNVNSMIAEEICGKDAYNQKAIDDAMLALDGTDNYSRIGANAVLGVSMAVARAAANSLNIPLYRYLGGANACTLPVPMFNIINGGAHANNSVDFQEFMIMPFGFSKFSNALRAATEVYQTLKKILNDLGHSTAVGDEGGF.

Q162 contacts (2R)-2-phosphoglycerate. E204 serves as the catalytic Proton donor.

The protein belongs to the enolase family.

It is found in the cytoplasm. The protein localises to the secreted. Its subcellular location is the cell surface. The catalysed reaction is (2R)-2-phosphoglycerate = phosphoenolpyruvate + H2O. It functions in the pathway carbohydrate degradation; glycolysis; pyruvate from D-glyceraldehyde 3-phosphate: step 4/5. In terms of biological role, catalyzes the reversible conversion of 2-phosphoglycerate (2-PG) into phosphoenolpyruvate (PEP). It is essential for the degradation of carbohydrates via glycolysis. In Campylobacter fetus, this protein is Enolase.